Here is a 304-residue protein sequence, read N- to C-terminus: Homoserine dehydrogenase (304 aa).

NADP(+)-binding residues include Tyr-8, Asn-10, Val-11, Arg-38, Arg-39, and Ser-73. Tyr-8 provides a ligand contact to NADPH. NADPH contacts are provided by Val-11 and Arg-38. Val-11 is a binding site for NAD(+). Residues Ser-73, Ser-74, Thr-100, and Lys-102 each coordinate NADPH. Ser-73 is a binding site for NAD(+). 2 residues coordinate NADP(+): Thr-100 and Lys-102. Residues Val-129 and Thr-133 each coordinate Na(+). Positions 182 and 185 each coordinate NADP(+). L-homoserine-binding residues include Glu-185 and Asp-196. Lys-200 functions as the Proton donor in the catalytic mechanism. NADP(+) is bound at residue Gly-284. Gly-284 contributes to the NADPH binding site. Position 284 (Gly-284) interacts with NAD(+).

Belongs to the homoserine dehydrogenase family. In terms of assembly, homodimer. A metal cation is required as a cofactor. In terms of processing, the enzyme is activated by reductive cleavage of the interchain disulfide bond between the two subunits.

It catalyses the reaction L-homoserine + NADP(+) = L-aspartate 4-semialdehyde + NADPH + H(+). The catalysed reaction is L-homoserine + NAD(+) = L-aspartate 4-semialdehyde + NADH + H(+). The protein operates within amino-acid biosynthesis; L-methionine biosynthesis via de novo pathway; L-homoserine from L-aspartate: step 3/3. It participates in amino-acid biosynthesis; L-threonine biosynthesis; L-threonine from L-aspartate: step 3/5. Its activity is regulated as follows. Inhibited by cysteine. Functionally, catalyzes the conversion of L-aspartate-beta-semialdehyde (L-Asa) to L-homoserine (L-Hse), the third step in the biosynthesis of threonine and methionine from aspartate. The sequence is that of Homoserine dehydrogenase from Sulfurisphaera tokodaii (strain DSM 16993 / JCM 10545 / NBRC 100140 / 7) (Sulfolobus tokodaii).